We begin with the raw amino-acid sequence, 436 residues long: Na(+)/H(+) antiporter NhaA (436 aa).

Transmembrane regions (helical) follow at residues 31–51 (VGGALLLAATIAALIWANSPG), 74–94 (LSLGAWASDGLLAIFFFIAGL), 112–132 (IVPIAAAIGGVAVPAIIYTLI), 143–163 (GWAIPTATDIAFALAVLAVIS), 173–193 (FLLTLAVVDDLIAISIIAVFY), 196–216 (NLQPQYLALALIPLGLFTWAV), 222–242 (SWYLLLPLAIITWVLVHESGV), 285–305 (VAVPIFAFFSAGVAIGGWAGF), 315–335 (IGIIAALILGKAIGIFGATFL), 350–370 (WIDVLGLAILAGIGFTVSLLI), and 384–404 (HAKVAILTASLVAALLATVIL).

It belongs to the NhaA Na(+)/H(+) (TC 2.A.33) antiporter family.

The protein localises to the cell membrane. The catalysed reaction is Na(+)(in) + 2 H(+)(out) = Na(+)(out) + 2 H(+)(in). Functionally, na(+)/H(+) antiporter that extrudes sodium in exchange for external protons. This is Na(+)/H(+) antiporter NhaA from Renibacterium salmoninarum (strain ATCC 33209 / DSM 20767 / JCM 11484 / NBRC 15589 / NCIMB 2235).